Reading from the N-terminus, the 334-residue chain is S-adenosylmethionine:tRNA ribosyltransferase-isomerase (334 aa).

The protein belongs to the QueA family. In terms of assembly, monomer.

It is found in the cytoplasm. It carries out the reaction 7-aminomethyl-7-carbaguanosine(34) in tRNA + S-adenosyl-L-methionine = epoxyqueuosine(34) in tRNA + adenine + L-methionine + 2 H(+). Its pathway is tRNA modification; tRNA-queuosine biosynthesis. In terms of biological role, transfers and isomerizes the ribose moiety from AdoMet to the 7-aminomethyl group of 7-deazaguanine (preQ1-tRNA) to give epoxyqueuosine (oQ-tRNA). The sequence is that of S-adenosylmethionine:tRNA ribosyltransferase-isomerase from Rubrobacter xylanophilus (strain DSM 9941 / JCM 11954 / NBRC 16129 / PRD-1).